Consider the following 194-residue polypeptide: MISRLTGKLVEKNPPQIVIDVNGVGYEADVSMQTFYNLPPVGESVQLFTQLIIREDAHLLFGFATAEERKTFRQLIKVGGIGAKTALGILSAMTADELAQAVAEEDVKRLSSAPGIGKKTAERMVLELRGKLVAHTVTDGLFAAAPAADETEDIVSTLLALGYSEREAKAAVKGVPEGTDVGEGVRLALKNLLK.

The interval 1–64 (MISRLTGKLV…EDAHLLFGFA (64 aa)) is domain I. The tract at residues 65–143 (TAEERKTFRQ…AHTVTDGLFA (79 aa)) is domain II. The segment at 144–147 (AAPA) is flexible linker. Residues 147-194 (AADETEDIVSTLLALGYSEREAKAAVKGVPEGTDVGEGVRLALKNLLK) are domain III.

This sequence belongs to the RuvA family. As to quaternary structure, homotetramer. Forms an RuvA(8)-RuvB(12)-Holliday junction (HJ) complex. HJ DNA is sandwiched between 2 RuvA tetramers; dsDNA enters through RuvA and exits via RuvB. An RuvB hexamer assembles on each DNA strand where it exits the tetramer. Each RuvB hexamer is contacted by two RuvA subunits (via domain III) on 2 adjacent RuvB subunits; this complex drives branch migration. In the full resolvosome a probable DNA-RuvA(4)-RuvB(12)-RuvC(2) complex forms which resolves the HJ.

The protein localises to the cytoplasm. Functionally, the RuvA-RuvB-RuvC complex processes Holliday junction (HJ) DNA during genetic recombination and DNA repair, while the RuvA-RuvB complex plays an important role in the rescue of blocked DNA replication forks via replication fork reversal (RFR). RuvA specifically binds to HJ cruciform DNA, conferring on it an open structure. The RuvB hexamer acts as an ATP-dependent pump, pulling dsDNA into and through the RuvAB complex. HJ branch migration allows RuvC to scan DNA until it finds its consensus sequence, where it cleaves and resolves the cruciform DNA. The chain is Holliday junction branch migration complex subunit RuvA from Neisseria meningitidis serogroup C (strain 053442).